A 379-amino-acid polypeptide reads, in one-letter code: Probable protein arginine N-methyltransferase 6.1 (379 aa).

The disordered stretch occupies residues 1–35 (MLPSHLNGHSPLARRRPRLSAASPPATGDSDAAAA). The segment covering 19 to 35 (LSAASPPATGDSDAAAA) has biased composition (low complexity). One can recognise an SAM-dependent MTase PRMT-type domain in the interval 45–379 (DRIYFQSYSH…FLNIQLDCTM (335 aa)). S-adenosyl-L-methionine is bound by residues His-58, Arg-67, Gly-91, Glu-113, and Glu-142. Active-site residues include Glu-156 and Glu-165.

Belongs to the class I-like SAM-binding methyltransferase superfamily. Protein arginine N-methyltransferase family. PRMT6 subfamily.

Its function is as follows. Arginine methyltransferase that can both catalyze the formation of omega-N monomethylarginine (MMA) and asymmetrical dimethylarginine (aDMA). The sequence is that of Probable protein arginine N-methyltransferase 6.1 (PRMT6.1) from Oryza sativa subsp. indica (Rice).